The chain runs to 289 residues: MEANVTIPIWQNKPHGAARSVVRRIGTNLPLKPCPRASFETLPNISDLCLKDVPPVPTLADIAWIAADEEETYARVRSDTRPLRHTWKPSPLIVMQRNASVPNLRGSEERLLALKKPALPALSRTTELQDELSHLRSQIAKIVAADAASASLTPDFFSSGSSNVSSPLPCFGSSLHSTTSFVISDITEETEVEVPELPTVPLLCSASPECCKPEHKTTCSSSEEDDCISLSKASSFADMMGILKDFHRIKQSQDLSRSLLKEEDPAVLISEVLRRKFALKEEDISRKGN.

Thr27 is subject to Phosphothreonine. Ser38 carries the post-translational modification Phosphoserine. Ser100 bears the Phosphoserine; by AMPK mark. Residues Ser107, Ser221, and Ser222 each carry the phosphoserine modification. Residue Ser235 is modified to Phosphoserine; by AMPK. Phosphoserine occurs at positions 258 and 270.

Belongs to the MTFR1 family. In terms of processing, phosphorylated by AMPK. Upon stress, phosphorylation at Ser-100 and Ser-235 by AMPK is sufficient to induce mitochondrial fragmentation.

Its subcellular location is the mitochondrion outer membrane. In terms of biological role, mitochondrial protein required for adaptation of miochondrial dynamics to metabolic changes. Regulates mitochondrial morphology at steady state and mediates AMPK-dependent stress-induced mitochondrial fragmentation via the control of OPA1 levels. This is Mitochondrial fission regulator 1-like (Mtfr1l) from Mus musculus (Mouse).